We begin with the raw amino-acid sequence, 265 residues long: Mlc titration factor A (265 aa).

Zn(2+)-binding residues include H111, H148, H152, and E211.

Belongs to the MtfA family. In terms of assembly, interacts with Mlc. It depends on Zn(2+) as a cofactor.

It localises to the cytoplasm. Its function is as follows. Involved in the modulation of the activity of the glucose-phosphotransferase system (glucose-PTS). Interacts with the transcriptional repressor Mlc, preventing its interaction with DNA and leading to the modulation of expression of genes regulated by Mlc, including ptsG, which encodes the PTS system glucose-specific EIICB component. Functionally, shows zinc-dependent metallopeptidase activity. The sequence is that of Mlc titration factor A from Escherichia fergusonii (strain ATCC 35469 / DSM 13698 / CCUG 18766 / IAM 14443 / JCM 21226 / LMG 7866 / NBRC 102419 / NCTC 12128 / CDC 0568-73).